The primary structure comprises 1044 residues: Probable translation initiation factor IF-2 (1044 aa).

The 93-residue stretch at phenylalanine 173 to isoleucine 265 folds into the DOD-type homing endonuclease domain. Residues threonine 451–leucine 668 enclose the tr-type G domain. Residues aspartate 524–histidine 528 and asparagine 578–aspartate 581 contribute to the GTP site.

The protein belongs to the TRAFAC class translation factor GTPase superfamily. Classic translation factor GTPase family. IF-2 subfamily. Post-translationally, this protein undergoes a protein self splicing that involves a post-translational excision of the intervening region (intein) followed by peptide ligation.

In terms of biological role, function in general translation initiation by promoting the binding of the formylmethionine-tRNA to ribosomes. Seems to function along with eIF-2. The polypeptide is Probable translation initiation factor IF-2 (infB) (Pyrococcus horikoshii (strain ATCC 700860 / DSM 12428 / JCM 9974 / NBRC 100139 / OT-3)).